Reading from the N-terminus, the 402-residue chain is UDP-GlcNAc:betaGal beta-1,3-N-acetylglucosaminyltransferase 9 (402 aa).

Residues 1-10 (MRRRLRLRRD) are Cytoplasmic-facing. Residues 11–27 (ALLTLLLGASLGLLLYA) traverse the membrane as a helical; Signal-anchor for type II membrane protein segment. Topologically, residues 28 to 402 (QRDGAAPTAS…VAAGPFQWDS (375 aa)) are lumenal. Residues 32–47 (AAPTASAPRGRGRAAP) are compositionally biased toward low complexity. The disordered stretch occupies residues 32 to 83 (AAPTASAPRGRGRAAPRPTPGPRAFQLPDAGAAPPAYEGDTPAPPTPTGPFD).

Belongs to the glycosyltransferase 31 family.

Its subcellular location is the golgi apparatus membrane. This chain is UDP-GlcNAc:betaGal beta-1,3-N-acetylglucosaminyltransferase 9, found in Homo sapiens (Human).